We begin with the raw amino-acid sequence, 415 residues long: Probable G-protein coupled receptor 19 (415 aa).

Residues 1–69 lie on the Extracellular side of the membrane; that stretch reads MVFAHRMDND…LNPGEVATAS (69 aa). Residues N25 and N52 are each glycosylated (N-linked (GlcNAc...) asparagine). Residues 70-90 form a helical membrane-spanning segment; it reads IFFGALWLFSIFGNSLVCLVI. At 91–102 the chain is on the cytoplasmic side; the sequence is HRSRRTQSTTNY. Residues 103–123 form a helical membrane-spanning segment; that stretch reads FVVSMACADLLISVASTPFVV. Residues 124–152 are Extracellular-facing; sequence LQFTTGRWTLGSAMCKVVRYFQYLTPGVQ. C138 and C210 are oxidised to a cystine. A helical transmembrane segment spans residues 153–173; sequence IYVLLSICIDRFYTIVYPLSF. The Cytoplasmic segment spans residues 174 to 182; it reads KVSREKAKK. Residues 183-203 traverse the membrane as a helical segment; it reads MIAASWILDAAFVTPVFFFYG. Topologically, residues 204–221 are extracellular; the sequence is SNWDSHCNYFLPPSWEGT. Residues 222-242 traverse the membrane as a helical segment; it reads AYTVIHFLVGFVIPSILIILF. Topologically, residues 243–277 are cytoplasmic; that stretch reads YQKVIKYIWRIGTDGRTLRRTMNIVPRTKVKTVKM. A helical membrane pass occupies residues 278 to 298; that stretch reads FLLLNLVFLFSWLPFHVAQLW. The Extracellular portion of the chain corresponds to 299-309; sequence HPHEQDYKKSS. A helical membrane pass occupies residues 310 to 332; the sequence is LVFTAVTWVSFSSSASKPTLYSI. The Cytoplasmic segment spans residues 333-415; that stretch reads YNANFRRGMK…INSNPPNTFV (83 aa).

Belongs to the G-protein coupled receptor 1 family. Strongly expressed in the brain.

It is found in the cell membrane. In terms of biological role, G-protein coupled receptor that plays a role in the regulation of circadian rhythms and energy metabolism. Participates in maintaining proper circadian gene expression in the suprachiasmatic nucleus (SCN), the locus of the master circadian clock in the brain. May function as a coordinator of aging-associated metabolic dysfunction, stress response, DNA integrity management, and eventual senescence. Upon binding to adropin, modulates mitochondrial energy metabolism via the p44/42-PDK4 signaling pathway, influencing pyruvate dehydrogenase activity. The chain is Probable G-protein coupled receptor 19 (Gpr19) from Mus musculus (Mouse).